The sequence spans 126 residues: Large ribosomal subunit protein uL22 (126 aa).

Belongs to the universal ribosomal protein uL22 family. Part of the 50S ribosomal subunit.

In terms of biological role, this protein binds specifically to 23S rRNA; its binding is stimulated by other ribosomal proteins, e.g. L4, L17, and L20. It is important during the early stages of 50S assembly. It makes multiple contacts with different domains of the 23S rRNA in the assembled 50S subunit and ribosome. Its function is as follows. The globular domain of the protein is located near the polypeptide exit tunnel on the outside of the subunit, while an extended beta-hairpin is found that lines the wall of the exit tunnel in the center of the 70S ribosome. This is Large ribosomal subunit protein uL22 from Maricaulis maris (strain MCS10) (Caulobacter maris).